Here is a 158-residue protein sequence, read N- to C-terminus: MSGLTHFDAQGAAHMVDVSDKEVTDRVAIARGAVRMAPETLAMIEGGRAKKGDVLAVARLAGIMGAKKTADLIPLCHPLPITKVALELVPDADLPGVRIEATVKTSGQTGVEMEALTAVSVAALTIYDMVKAVDKAMQLTDIRLAFKDGGKSGRFEAE.

Residues 75–77 and 113–114 each bind substrate; these read LCH and ME. The active site involves Asp128.

Belongs to the MoaC family. Homohexamer; trimer of dimers.

It catalyses the reaction (8S)-3',8-cyclo-7,8-dihydroguanosine 5'-triphosphate = cyclic pyranopterin phosphate + diphosphate. It functions in the pathway cofactor biosynthesis; molybdopterin biosynthesis. Its function is as follows. Catalyzes the conversion of (8S)-3',8-cyclo-7,8-dihydroguanosine 5'-triphosphate to cyclic pyranopterin monophosphate (cPMP). The protein is Cyclic pyranopterin monophosphate synthase of Dinoroseobacter shibae (strain DSM 16493 / NCIMB 14021 / DFL 12).